Here is an 84-residue protein sequence, read N- to C-terminus: Small ribosomal subunit protein uS17 (84 aa).

Belongs to the universal ribosomal protein uS17 family. In terms of assembly, part of the 30S ribosomal subunit.

In terms of biological role, one of the primary rRNA binding proteins, it binds specifically to the 5'-end of 16S ribosomal RNA. The sequence is that of Small ribosomal subunit protein uS17 from Hamiltonella defensa subsp. Acyrthosiphon pisum (strain 5AT).